The sequence spans 394 residues: Galactose-3-O-sulfotransferase 2 (394 aa).

The Cytoplasmic segment spans residues 1 to 8; sequence MWGSQHRS. The helical; Signal-anchor for type II membrane protein transmembrane segment at 9–29 threads the bilayer; that stretch reads FQVALWFLVLAVFLLVGFLHV. Residues 30–394 are Lumenal-facing; the sequence is DFRLLIPDKV…TPKDIPFLKK (365 aa). N-linked (GlcNAc...) asparagine glycans are attached at residues Asn72, Asn176, Asn284, and Asn326.

Belongs to the galactose-3-O-sulfotransferase family.

It is found in the golgi apparatus. It localises to the golgi stack membrane. It participates in protein modification; carbohydrate sulfation. Strongly inhibited by Cu(2+) and Zn(2+). Functionally, transfers a sulfate group to the hydroxyl group at C3 of non-reducing beta-galactosyl residues. Acts both on type 1 (Gal-beta-1,3-GlcNAc) and type 2 (Gal-beta-1,4-GlcNAc) chains with similar efficiency. This chain is Galactose-3-O-sulfotransferase 2 (Gal3st2), found in Mus musculus (Mouse).